Here is a 1102-residue protein sequence, read N- to C-terminus: Coiled-coil domain-containing protein AGAP005037 (1102 aa).

Over residues 1-11 the composition is skewed to basic and acidic residues; it reads MLIRWKSKDKS. Disordered regions lie at residues 1-69 and 295-318; these read MLIR…HTLG and HKSK…RGMY. Residues 12–21 are compositionally biased toward low complexity; the sequence is SSSTSSSSST. The span at 50 to 65 shows a compositional bias: basic and acidic residues; that stretch reads IDDRRRSARSREDPRR. Residues 405 to 430 are a coiled coil; sequence HRIRVEHMERQLANLTGLVQKALTQN. 2 disordered regions span residues 450–475 and 489–539; these read RNAE…STCH and DIQG…PLVM. 2 coiled-coil regions span residues 554–579 and 614–654; these read EVYN…LRRL and DKER…EVIN. 3 disordered regions span residues 745 to 774, 832 to 958, and 1031 to 1087; these read LPIP…PSPR, TKIS…CSDN, and LCGG…TLPP. Polar residues predominate over residues 832–849; the sequence is TKISQSQLYPSEPVSSNV. Positions 867-881 are enriched in pro residues; sequence PPQPTRPTTGKPPVP. Residues 904–918 are compositionally biased toward low complexity; sequence TSSRSPLASPTSPHV. Positions 936–958 are enriched in polar residues; the sequence is DCEQQQRTSEGTDSGSESVCSDN.

The sequence is that of Coiled-coil domain-containing protein AGAP005037 from Anopheles gambiae (African malaria mosquito).